The primary structure comprises 245 residues: Flavin-dependent thymidylate synthase (245 aa).

The ThyX domain maps to isoleucine 5–lysine 210. FAD contacts are provided by residues serine 59, arginine 83 to arginine 85, and glutamine 91. DUMP-binding positions include glutamine 80–arginine 83, glutamine 91–arginine 95, and arginine 149. The ThyX motif signature appears at arginine 83–serine 93. FAD contacts are provided by residues asparagine 165 to arginine 167 and histidine 171. A dUMP-binding site is contributed by arginine 176. The active-site Involved in ionization of N3 of dUMP, leading to its activation is arginine 176.

It belongs to the thymidylate synthase ThyX family. Homotetramer. Requires FAD as cofactor.

The enzyme catalyses dUMP + (6R)-5,10-methylene-5,6,7,8-tetrahydrofolate + NADPH + H(+) = dTMP + (6S)-5,6,7,8-tetrahydrofolate + NADP(+). Its pathway is pyrimidine metabolism; dTTP biosynthesis. Catalyzes the reductive methylation of 2'-deoxyuridine-5'-monophosphate (dUMP) to 2'-deoxythymidine-5'-monophosphate (dTMP) while utilizing 5,10-methylenetetrahydrofolate (mTHF) as the methyl donor, and NADPH and FADH(2) as the reductant. The protein is Flavin-dependent thymidylate synthase of Thermococcus onnurineus (strain NA1).